Consider the following 340-residue polypeptide: Selenide, water dikinase (340 aa).

C13 is an active-site residue. Residues K16 and 43-45 (ASD) contribute to the ATP site. Position 46 (D46) interacts with Mg(2+). ATP contacts are provided by residues D63, D86, and 133-135 (GHS). Mg(2+) is bound at residue D86. D221 is a binding site for Mg(2+).

Belongs to the selenophosphate synthase 1 family. Class I subfamily. Homodimer. Requires Mg(2+) as cofactor.

The enzyme catalyses hydrogenselenide + ATP + H2O = selenophosphate + AMP + phosphate + 2 H(+). Functionally, synthesizes selenophosphate from selenide and ATP. The sequence is that of Selenide, water dikinase from Desulfitobacterium hafniense (strain Y51).